The following is a 101-amino-acid chain: Large ribosomal subunit protein uL23 (101 aa).

Belongs to the universal ribosomal protein uL23 family. As to quaternary structure, part of the 50S ribosomal subunit. Contacts protein L29, and trigger factor when it is bound to the ribosome.

One of the early assembly proteins it binds 23S rRNA. One of the proteins that surrounds the polypeptide exit tunnel on the outside of the ribosome. Forms the main docking site for trigger factor binding to the ribosome. This chain is Large ribosomal subunit protein uL23, found in Aromatoleum aromaticum (strain DSM 19018 / LMG 30748 / EbN1) (Azoarcus sp. (strain EbN1)).